A 458-amino-acid polypeptide reads, in one-letter code: uncharacterized protein (458 aa).

One can recognise a TRAM domain in the interval 5–65 (QAPVNKNDVV…KGYGFGRVLN (61 aa)). Residues cysteine 78, cysteine 84, cysteine 87, and cysteine 165 each contribute to the [4Fe-4S] cluster site. S-adenosyl-L-methionine is bound by residues glutamine 289, tyrosine 318, glutamate 339, and aspartate 387. Cysteine 414 (nucleophile) is an active-site residue.

It belongs to the class I-like SAM-binding methyltransferase superfamily. RNA M5U methyltransferase family.

This is an uncharacterized protein from Halalkalibacterium halodurans (strain ATCC BAA-125 / DSM 18197 / FERM 7344 / JCM 9153 / C-125) (Bacillus halodurans).